The following is a 148-amino-acid chain: Ribonuclease H (148 aa).

An RNase H type-1 domain is found at 1-143 (MNQVVIYTDG…ADMLANKGVE (143 aa)). Mg(2+) is bound by residues Asp-9, Glu-47, Asp-69, and Asp-135.

Belongs to the RNase H family. In terms of assembly, monomer. The cofactor is Mg(2+).

It localises to the cytoplasm. It carries out the reaction Endonucleolytic cleavage to 5'-phosphomonoester.. Functionally, endonuclease that specifically degrades the RNA of RNA-DNA hybrids. The protein is Ribonuclease H of Acidovorax sp. (strain JS42).